A 630-amino-acid polypeptide reads, in one-letter code: MHFHERFDVIVIGGGHAGTEAALAAARMGSKTLLLTHNIDTLGQMSCNPAIGGIGKGHLVKEIDALGGAMAIATDYAGIQFRTLNSSKGPAVRATRAQADRALYRAKIQEILQNQPNLRLFQQAVDDLIVENGRVTGVVTQMGLAFEAPAVVLTAGTFLSGKIHIGMQNYSGGRAGDPPSIALADRLRELPIRIGRLKTGTPPRIDANTINFDLMTEQKGDTPLPVMSFIGDVSQHPKQISCFVTHTNEKTHDIIRGGLDRSPMYSGVIEGVGPRYCPSIEDKIHRFADKSSHQIFIEPEGLNTNEIYPNGISTSLPFDVQLNLVRSIKGMENAEIIRPGYAIEYDYFDPRDLKNSLETKSIDGLFFAGQINGTTGYEEAGAQGLLAGMNASLQVQGKEIWCPRRDEAYLGVLVDDLSTLGTKEPYRMFTSRAEYRLLLREDNADLRLTEKGREIGLVDDERWAKFSEKRESIELELQRLRSQWVHPNSPLIDVLNPELNTPISREASFEDLLRRPEMDYPKLMSLEGFGPGLDDPRAAEQVQIQVKYSGYIQRQQDEIDKAIRHETTGLPLDLDYQEVPGLSNEVIAKLNDHKPETIGQASRISGMTPAAISILLVHLKRRGLLRKKAS.

FAD is bound by residues G13 to G18, V125, and S180. G273–F287 contributes to the NAD(+) binding site. Q370 is an FAD binding site.

The protein belongs to the MnmG family. Homodimer. Heterotetramer of two MnmE and two MnmG subunits. Requires FAD as cofactor.

The protein localises to the cytoplasm. Functionally, NAD-binding protein involved in the addition of a carboxymethylaminomethyl (cmnm) group at the wobble position (U34) of certain tRNAs, forming tRNA-cmnm(5)s(2)U34. This Shewanella woodyi (strain ATCC 51908 / MS32) protein is tRNA uridine 5-carboxymethylaminomethyl modification enzyme MnmG.